A 339-amino-acid chain; its full sequence is MEPIHNPPPQTCSYSRPSTTYTSFKDASCGTKVTRIIIALFLIVISCGLILCAYTFRDLLDADYSAQEGPQQATKLLQQLDKVLTGPPLPIWDNEHLFQFSCLMQNKHRRVLPIDICNPLTKFNFLEYICNCLMTKQSVNVNETDMCELFCPPTCTPENYRRLLCTSSVFPFVMWHDPSADTQEAMLTKMDQTMSSGRVGNSHWVLVIVDIEHRCVTFFDSFYNYIASPQQMREQLEGLAASLGAIYPKEGGADSDQEELLSPFQVRIGSTVKVQSPGEFTCGAWCCQFLAWYLENPDFDLEEKVPTNPSERRALLADFISTTEQAMSRYSSLSWPTTD.

Residues 36–56 (IIIALFLIVISCGLILCAYTF) traverse the membrane as a helical segment. Catalysis depends on residues H203, D220, and C282.

The protein belongs to the peptidase C48 family.

The protein resides in the secreted. It is found in the host cell. It localises to the membrane. In terms of biological role, effector proteins function to alter host cell physiology and promote bacterial survival in host tissues. This protease possesses deubiquitinating and deneddylating activities. In Chlamydia trachomatis serovar A (strain ATCC VR-571B / DSM 19440 / HAR-13), this protein is Deubiquitinase and deneddylase Dub2 (cdu2).